A 153-amino-acid polypeptide reads, in one-letter code: Ribosomal RNA large subunit methyltransferase H (153 aa).

Residues Leu71 and Gly102 each coordinate S-adenosyl-L-methionine.

It belongs to the RNA methyltransferase RlmH family. As to quaternary structure, homodimer.

Its subcellular location is the cytoplasm. It catalyses the reaction pseudouridine(1915) in 23S rRNA + S-adenosyl-L-methionine = N(3)-methylpseudouridine(1915) in 23S rRNA + S-adenosyl-L-homocysteine + H(+). Its function is as follows. Specifically methylates the pseudouridine at position 1915 (m3Psi1915) in 23S rRNA. The sequence is that of Ribosomal RNA large subunit methyltransferase H from Anaeromyxobacter sp. (strain K).